A 283-amino-acid chain; its full sequence is Lipoyl synthase (283 aa).

The [4Fe-4S] cluster site is built by cysteine 35, cysteine 40, cysteine 46, cysteine 61, cysteine 65, cysteine 68, and serine 273. Residues 47–262 (FRSRQATFLI…RERALAMGFK (216 aa)) enclose the Radical SAM core domain.

This sequence belongs to the radical SAM superfamily. Lipoyl synthase family. Requires [4Fe-4S] cluster as cofactor.

It localises to the cytoplasm. The catalysed reaction is [[Fe-S] cluster scaffold protein carrying a second [4Fe-4S](2+) cluster] + N(6)-octanoyl-L-lysyl-[protein] + 2 oxidized [2Fe-2S]-[ferredoxin] + 2 S-adenosyl-L-methionine + 4 H(+) = [[Fe-S] cluster scaffold protein] + N(6)-[(R)-dihydrolipoyl]-L-lysyl-[protein] + 4 Fe(3+) + 2 hydrogen sulfide + 2 5'-deoxyadenosine + 2 L-methionine + 2 reduced [2Fe-2S]-[ferredoxin]. Its pathway is protein modification; protein lipoylation via endogenous pathway; protein N(6)-(lipoyl)lysine from octanoyl-[acyl-carrier-protein]: step 2/2. Its function is as follows. Catalyzes the radical-mediated insertion of two sulfur atoms into the C-6 and C-8 positions of the octanoyl moiety bound to the lipoyl domains of lipoate-dependent enzymes, thereby converting the octanoylated domains into lipoylated derivatives. The sequence is that of Lipoyl synthase from Geotalea uraniireducens (strain Rf4) (Geobacter uraniireducens).